The sequence spans 141 residues: Ribonuclease P protein component (141 aa).

Belongs to the RnpA family. As to quaternary structure, consists of a catalytic RNA component (M1 or rnpB) and a protein subunit.

It carries out the reaction Endonucleolytic cleavage of RNA, removing 5'-extranucleotides from tRNA precursor.. Its function is as follows. RNaseP catalyzes the removal of the 5'-leader sequence from pre-tRNA to produce the mature 5'-terminus. It can also cleave other RNA substrates such as 4.5S RNA. The protein component plays an auxiliary but essential role in vivo by binding to the 5'-leader sequence and broadening the substrate specificity of the ribozyme. The chain is Ribonuclease P protein component from Onion yellows phytoplasma (strain OY-M).